The primary structure comprises 519 residues: Glutamate--cysteine ligase (519 aa).

It belongs to the glutamate--cysteine ligase type 1 family. Type 1 subfamily.

It carries out the reaction L-cysteine + L-glutamate + ATP = gamma-L-glutamyl-L-cysteine + ADP + phosphate + H(+). The protein operates within sulfur metabolism; glutathione biosynthesis; glutathione from L-cysteine and L-glutamate: step 1/2. This Edwardsiella ictaluri (strain 93-146) protein is Glutamate--cysteine ligase.